The chain runs to 446 residues: Glucose-1-phosphate adenylyltransferase (446 aa).

Alpha-D-glucose 1-phosphate-binding positions include Y119, G184, E199–K200, and S217.

It belongs to the bacterial/plant glucose-1-phosphate adenylyltransferase family. Homotetramer.

The enzyme catalyses alpha-D-glucose 1-phosphate + ATP + H(+) = ADP-alpha-D-glucose + diphosphate. The protein operates within glycan biosynthesis; glycogen biosynthesis. Involved in the biosynthesis of ADP-glucose, a building block required for the elongation reactions to produce glycogen. Catalyzes the reaction between ATP and alpha-D-glucose 1-phosphate (G1P) to produce pyrophosphate and ADP-Glc. This chain is Glucose-1-phosphate adenylyltransferase, found in Rhodopirellula baltica (strain DSM 10527 / NCIMB 13988 / SH1).